Here is a 173-residue protein sequence, read N- to C-terminus: Competence protein C (173 aa).

In terms of biological role, involved in transformation (genetic competence for DNA uptake). The chain is Competence protein C (comC) from Haemophilus influenzae (strain ATCC 51907 / DSM 11121 / KW20 / Rd).